The primary structure comprises 256 residues: 5-oxoprolinase subunit A (256 aa).

Belongs to the LamB/PxpA family. In terms of assembly, forms a complex composed of PxpA, PxpB and PxpC.

It carries out the reaction 5-oxo-L-proline + ATP + 2 H2O = L-glutamate + ADP + phosphate + H(+). Functionally, catalyzes the cleavage of 5-oxoproline to form L-glutamate coupled to the hydrolysis of ATP to ADP and inorganic phosphate. This is 5-oxoprolinase subunit A from Alkaliphilus metalliredigens (strain QYMF).